The following is a 60-amino-acid chain: Anionic antimicrobial peptide 2 (60 aa).

Hemolymph.

It localises to the secreted. Functionally, antimicrobial protein. Has antibacterial activity against the Gram-positive bacteria M.luteus (MIC=86.6 uM), L.monocytogenes (MIC=86.6 uM), and S.lutea (MIC=86.6 uM). Lacks antibacterial activity against the Gram-positive bacteria B.circulans and S.aureus, and the Gram-negative bacteria E.coli D31, E.coli ATCC 25922, and S.typhimurium. Has antifungal activity against P.pastoris (MIC=86.6 uM) and P.stipitis (MIC=90.9 uM), but lacks antifungal activity against A.niger, C.albicans, C.albidus, C.fructus, C.wickerhamii, F.oxysporum, S.cerevisiae, S.pombe, T.harzianum, and Z.marxianus. This chain is Anionic antimicrobial peptide 2, found in Galleria mellonella (Greater wax moth).